The primary structure comprises 340 residues: HTH-type transcriptional regulator VirS (340 aa).

An HTH araC/xylS-type domain is found at 236–334 (ERVVGLARRL…GMTPRQYRAY (99 aa)). DNA-binding regions (H-T-H motif) lie at residues 254–275 (EAIADQLDMHPRTLQRRLAAEG) and 301–324 (LSQIAVLLGYSEQSALNRSCRRWF).

Phosphorylated by PknK. Phosphorylation increases affinity for the mymA promoter.

Its function is as follows. Regulates the expression of the mymA operon. The polypeptide is HTH-type transcriptional regulator VirS (virS) (Mycobacterium tuberculosis (strain CDC 1551 / Oshkosh)).